We begin with the raw amino-acid sequence, 347 residues long: Probable arabinogalactan endo-beta-1,4-galactanase A (347 aa).

A signal peptide spans methionine 1–alanine 16. The Proton donor role is filled by glutamate 150. Glutamate 260 functions as the Nucleophile in the catalytic mechanism.

Belongs to the glycosyl hydrolase 53 family.

The protein localises to the secreted. The catalysed reaction is The enzyme specifically hydrolyzes (1-&gt;4)-beta-D-galactosidic linkages in type I arabinogalactans.. Its function is as follows. Endogalactanase involved in the degradation of plant cell wall polysaccharides, and more particularly of hairy regions of pectin. This chain is Probable arabinogalactan endo-beta-1,4-galactanase A (galA), found in Aspergillus oryzae (strain ATCC 42149 / RIB 40) (Yellow koji mold).